A 96-amino-acid chain; its full sequence is Protein Vpr (96 aa).

Positions 1 to 42 (MEQAPENQGPQREPYNEWTLELLEELKSEAVRHFPRIWLHSL) are homooligomerization. S79, S94, and S96 each carry phosphoserine; by host.

This sequence belongs to the HIV-1 VPR protein family. As to quaternary structure, homooligomer, may form homodimer. Interacts with p6-gag region of the Pr55 Gag precursor protein through a (Leu-X-X)4 motif near the C-terminus of the P6gag protein. Interacts with host UNG. May interact with host RAD23A/HHR23A. Interacts with host VPRBP/DCAF1, leading to hijack the CUL4A-RBX1-DDB1-DCAF1/VPRBP complex, mediating ubiquitination of host proteins such as TERT and ZGPAT and arrest of the cell cycle in G2 phase. In terms of processing, phosphorylated on several residues by host. These phosphorylations regulate VPR activity for the nuclear import of the HIV-1 pre-integration complex.

It localises to the virion. It is found in the host nucleus. Its subcellular location is the host extracellular space. During virus replication, may deplete host UNG protein, and incude G2-M cell cycle arrest. Acts by targeting specific host proteins for degradation by the 26S proteasome, through association with the cellular CUL4A-DDB1 E3 ligase complex by direct interaction with host VPRPB/DCAF-1. Cell cycle arrest reportedly occurs within hours of infection and is not blocked by antiviral agents, suggesting that it is initiated by the VPR carried into the virion. Additionally, VPR induces apoptosis in a cell cycle dependent manner suggesting that these two effects are mechanistically linked. Detected in the serum and cerebrospinal fluid of AIDS patient, VPR may also induce cell death to bystander cells. Functionally, during virus entry, plays a role in the transport of the viral pre-integration (PIC) complex to the host nucleus. This function is crucial for viral infection of non-dividing macrophages. May act directly at the nuclear pore complex, by binding nucleoporins phenylalanine-glycine (FG)-repeat regions. This is Protein Vpr from Human immunodeficiency virus type 1 group M subtype B (isolate SF33) (HIV-1).